We begin with the raw amino-acid sequence, 194 residues long: Imidazoleglycerol-phosphate dehydratase (194 aa).

It belongs to the imidazoleglycerol-phosphate dehydratase family.

It localises to the cytoplasm. The catalysed reaction is D-erythro-1-(imidazol-4-yl)glycerol 3-phosphate = 3-(imidazol-4-yl)-2-oxopropyl phosphate + H2O. It functions in the pathway amino-acid biosynthesis; L-histidine biosynthesis; L-histidine from 5-phospho-alpha-D-ribose 1-diphosphate: step 6/9. The polypeptide is Imidazoleglycerol-phosphate dehydratase (Thermoanaerobacter pseudethanolicus (strain ATCC 33223 / 39E) (Clostridium thermohydrosulfuricum)).